The chain runs to 225 residues: PKHD-type hydroxylase YbiX (225 aa).

The region spanning 78-177 (TLSTPLFNRY…RVASFMWIQS (100 aa)) is the Fe2OG dioxygenase domain. Fe cation is bound by residues histidine 96, aspartate 98, and histidine 158. Arginine 168 serves as a coordination point for 2-oxoglutarate.

It depends on Fe(2+) as a cofactor. The cofactor is L-ascorbate.

The chain is PKHD-type hydroxylase YbiX from Escherichia fergusonii (strain ATCC 35469 / DSM 13698 / CCUG 18766 / IAM 14443 / JCM 21226 / LMG 7866 / NBRC 102419 / NCTC 12128 / CDC 0568-73).